A 537-amino-acid chain; its full sequence is MGDEDKRITYEDSEPSTGMNYTPSMHQEAQEETVMKLKGIDANEPTEGSILLKSSEKKLQETPTEANHVQRLRQMLACPPHGLLDRVITNVTIIVLLWAVVWSITGSECLPGGNLFGIIILFYCAIIGGKLLGLIKLPTLPPLPSLLGMLLAGFLIRNIPVINDNVQIKHKWSSSLRSIALSIILVRAGLGLDSKALKKLKGVCVRLSMGPCIVEACTSALLAHYLLGLPWQWGFILGFVLGAVSPAVVVPSMLLLQGGGYGVEKGVPTLLMAAGSFDDILAITGFNTCLGIAFSTGSTVFNVLRGVLEVVIGVATGSVLGFFIQYFPSRDQDKLVCKRTFLVLGLSVLAVFSSVHFGFPGSGGLCTLVMAFLAGMGWTSEKAEVEKIIAVAWDIFQPLLFGLIGAEVSIASLRPETVGLCVATVGIAVLIRILTTFLMVCFAGFNLKEKIFISFAWLPKATVQAAIGSVALDTARSHGEKQLEDYGMDVLTVAFLSILITAPIGSLLIGLLGPRLLQKVEHQNKDEEVQGETSVQV.

A compositionally biased stretch (basic and acidic residues) spans 1-10 (MGDEDKRITY). Residues 1–28 (MGDEDKRITYEDSEPSTGMNYTPSMHQE) are disordered. Topologically, residues 1–86 (MGDEDKRITY…ACPPHGLLDR (86 aa)) are cytoplasmic. Positions 15 to 27 (PSTGMNYTPSMHQ) are enriched in polar residues. At Ser-49 the chain carries Phosphoserine. A helical transmembrane segment spans residues 87–104 (VITNVTIIVLLWAVVWSI). Residues 105-113 (TGSECLPGG) are Extracellular-facing. The helical transmembrane segment at 114–133 (NLFGIIILFYCAIIGGKLLG) threads the bilayer. Topologically, residues 134–144 (LIKLPTLPPLP) are cytoplasmic. A helical transmembrane segment spans residues 145 to 161 (SLLGMLLAGFLIRNIPV). Residues 162–171 (INDNVQIKHK) are Extracellular-facing. A helical transmembrane segment spans residues 172–189 (WSSSLRSIALSIILVRAG). Residues 190-200 (LGLDSKALKKL) are Cytoplasmic-facing. Residues 201 to 227 (KGVCVRLSMGPCIVEACTSALLAHYLL) traverse the membrane as a helical segment. Residues 228–233 (GLPWQW) are Extracellular-facing. Residues 234-242 (GFILGFVLG) traverse the membrane as a helical segment. Over 243–270 (AVSPAVVVPSMLLLQGGGYGVEKGVPTL) the chain is Cytoplasmic. Na(+) is bound by residues Val-244, Gly-275, Asp-278, and Asp-279. Residues 271 to 290 (LMAAGSFDDILAITGFNTCL) form a helical membrane-spanning segment. The Extracellular segment spans residues 291 to 300 (GIAFSTGSTV). Residues 301 to 324 (FNVLRGVLEVVIGVATGSVLGFFI) traverse the membrane as a helical segment. Residues 325–339 (QYFPSRDQDKLVCKR) lie on the Cytoplasmic side of the membrane. The chain crosses the membrane as a helical span at residues 340 to 357 (TFLVLGLSVLAVFSSVHF). At 358–361 (GFPG) the chain is on the extracellular side. The helical transmembrane segment at 362 to 373 (SGGLCTLVMAFL) threads the bilayer. The Cytoplasmic portion of the chain corresponds to 374–390 (AGMGWTSEKAEVEKIIA). Residues 391-411 (VAWDIFQPLLFGLIGAEVSIA) traverse the membrane as a helical segment. Residues 412–417 (SLRPET) are Extracellular-facing. A helical transmembrane segment spans residues 418–440 (VGLCVATVGIAVLIRILTTFLMV). The Cytoplasmic portion of the chain corresponds to 441–461 (CFAGFNLKEKIFISFAWLPKA). A helical transmembrane segment spans residues 462-473 (TVQAAIGSVALD). Residues 474–486 (TARSHGEKQLEDY) are Extracellular-facing. Residues 487-509 (GMDVLTVAFLSILITAPIGSLLI) form a helical membrane-spanning segment. Over 510–537 (GLLGPRLLQKVEHQNKDEEVQGETSVQV) the chain is Cytoplasmic.

It belongs to the monovalent cation:proton antiporter 1 (CPA1) transporter (TC 2.A.36) family. As to quaternary structure, homodimer. Dimerization is essential for SLC9B2 activity. Lipids seem to play a role in the stabilization of the dimerization subdomain. In terms of tissue distribution, widely expressed. High levels detected in the distal tubules of the kidney nephron. Detected in red blood cells (at protein level).

Its subcellular location is the cell membrane. The protein localises to the mitochondrion membrane. The protein resides in the endosome membrane. It is found in the recycling endosome membrane. It localises to the cytoplasmic vesicle. Its subcellular location is the secretory vesicle. The protein localises to the synaptic vesicle membrane. The protein resides in the cell projection. It is found in the cilium. It localises to the flagellum membrane. Its subcellular location is the basolateral cell membrane. The protein localises to the apical cell membrane. It carries out the reaction Li(+)(out) + H(+)(in) = Li(+)(in) + H(+)(out). The catalysed reaction is Li(+)(in) + Na(+)(out) = Li(+)(out) + Na(+)(in). The enzyme catalyses Na(+)(in) + H(+)(out) = Na(+)(out) + H(+)(in). Allosterically inhibited by the N-terminal domain. Inhibited by phloretin. Electroneutral Na(+) Li(+)/H(+) antiporter that extrudes Na(+) or Li(+) in exchange for external protons across the membrane. Uses the proton gradient/membrane potential to extrude sodium. Contributes to the regulation of intracellular pH and sodium homeostasis. Also able to mediate Na(+)/Li(+) antiporter activity in kidney. May play a physiological role in renal tubular function and blood pressure homeostasis. Plays an important role for insulin secretion and clathrin-mediated endocytosis in beta-cells. Involved in sperm motility and fertility. It is controversial whether SLC9B2 plays a role in osteoclast differentiation or not. The protein is Sodium/hydrogen exchanger 9B2 of Homo sapiens (Human).